A 404-amino-acid polypeptide reads, in one-letter code: Multidrug resistance protein MdtG (404 aa).

11 helical membrane passes run 19-39 (LGCF…PLYV), 56-76 (LVFS…GGLA), 90-110 (LGMA…QFLI), 113-133 (ALLG…ATQV), 144-164 (TLST…GLLA), 171-191 (PVFF…FFFI), 222-242 (LFVT…ILTL), 254-274 (IAFI…LSAP), 288-308 (ILIV…FVQT), 317-337 (FLLG…LVYN), and 376-396 (AVFC…WNSL).

The protein belongs to the major facilitator superfamily. DHA1 family. MdtG (TC 2.A.1.2.20) subfamily.

The protein resides in the cell inner membrane. The protein is Multidrug resistance protein MdtG of Salmonella dublin (strain CT_02021853).